A 225-amino-acid chain; its full sequence is PKHD-type hydroxylase YbiX (225 aa).

Positions 78-177 (TLSTPLFNRY…RVASFMWIQS (100 aa)) constitute a Fe2OG dioxygenase domain. His-96, Asp-98, and His-158 together coordinate Fe cation. Arg-168 is a binding site for 2-oxoglutarate.

The cofactor is Fe(2+). It depends on L-ascorbate as a cofactor.

This chain is PKHD-type hydroxylase YbiX, found in Escherichia coli O7:K1 (strain IAI39 / ExPEC).